Reading from the N-terminus, the 411-residue chain is Putative nickel insertion protein (411 aa).

This sequence belongs to the LarC family.

The polypeptide is Putative nickel insertion protein (Methanothermobacter thermautotrophicus (strain ATCC 29096 / DSM 1053 / JCM 10044 / NBRC 100330 / Delta H) (Methanobacterium thermoautotrophicum)).